Reading from the N-terminus, the 185-residue chain is Pre-histone-like nucleoprotein (185 aa).

Serine 2 bears the N-acetylserine; by host mark. A propeptide spanning residues 2-23 is cleaved from the precursor; it reads SILISPDNNTGWGLCSAGMYGG. At threonine 55 the chain carries Phosphothreonine; by host. Serine 172 carries the phosphoserine; by host modification. The Nuclear localization signal signature appears at 175–185; the sequence is RVPVRSRPPRS.

The protein belongs to the adenoviridae histone-like nucleoprotein family. Interacts with the core-capsid bridging protein; this interaction bridges the virus core to the capsid. Interacts with host NPM1; this interaction might play a role in placing the pre-histone-like nucleoprotein on the viral DNA or regulating viral gene expression. Interacts with host HMGB1; this interaction inhibits host immune response. Post-translationally, cleaved near the N-terminus by the viral protease during virion maturation to form the mature protein.

The protein resides in the virion. It is found in the host nucleus. Its subcellular location is the host nucleolus. Functionally, plays a role in the inhibition of host immune response within the nucleus. Interacts with cellular nucleosomes and immobilizes the host immune danger signal HMGB1 on chromatin. In turn, prevents HMGB1 release out of the cell and thus decreases inflammation. Also plays a role in the wrapping and condensation of the viral DNA. May also promote viral genome import into the nucleus. This is Pre-histone-like nucleoprotein from Human adenovirus F serotype 40 (HAdV-40).